Here is a 142-residue protein sequence, read N- to C-terminus: Organic hydroperoxide resistance protein-like 2 (142 aa).

The protein belongs to the OsmC/Ohr family.

The chain is Organic hydroperoxide resistance protein-like 2 from Staphylococcus epidermidis (strain ATCC 12228 / FDA PCI 1200).